A 390-amino-acid chain; its full sequence is Matrix metalloproteinase-23 (390 aa).

Residues 1–19 (MGRGARVPSEAPGAGVERR) lie on the Cytoplasmic side of the membrane. The propeptide occupies 1–78 (MGRGARVPSE…PGPLAPRRRR (78 aa)). A helical; Signal-anchor for type II membrane protein transmembrane segment spans residues 20–40 (WLGAALVALCLLPALVLLARL). The Lumenal portion of the chain corresponds to 41–390 (GAPAVPAWSA…TYSWRVRVRG (350 aa)). N-linked (GlcNAc...) asparagine glycans are attached at residues Asn-92 and Asn-148. A Zn(2+)-binding site is contributed by His-211. Residue Glu-212 is part of the active site. The Zn(2+) site is built by His-215 and His-221. An N-linked (GlcNAc...) asparagine glycan is attached at Asn-232. In terms of domain architecture, ShKT spans 255–289 (CLDRLFVCASWARRGFCDARRRLMKRLCPSSCDFC). Intrachain disulfides connect Cys-255–Cys-289, Cys-262–Cys-282, and Cys-271–Cys-286. One can recognise an Ig-like C2-type domain in the interval 295–380 (PTVATTPPPP…VVRRQQRVLT (86 aa)). Asn-316 carries N-linked (GlcNAc...) asparagine glycosylation. A disulfide bridge connects residues Cys-321 and Cys-370.

Belongs to the peptidase M10A family. The cofactor is Zn(2+). N-glycosylated. In terms of processing, proteolytic cleavage might yield an active form. Predominantly expressed in ovary, testis and prostate.

The protein resides in the endoplasmic reticulum membrane. The protein localises to the membrane. Inhibited by TIMP2. Its function is as follows. Protease. May regulate the surface expression of some potassium channels by retaining them in the endoplasmic reticulum. The chain is Matrix metalloproteinase-23 (MMP23B) from Homo sapiens (Human).